A 152-amino-acid polypeptide reads, in one-letter code: Large ribosomal subunit protein bL21 (152 aa).

The interval 115–152 is disordered; the sequence is VTSISNGEKPKKATTSAKPNTKKPSTAVKSSKVEKTPE. Polar residues predominate over residues 127 to 143; the sequence is ATTSAKPNTKKPSTAVK.

Belongs to the bacterial ribosomal protein bL21 family. As to quaternary structure, part of the 50S ribosomal subunit. Contacts protein L20.

Functionally, this protein binds to 23S rRNA in the presence of protein L20. The sequence is that of Large ribosomal subunit protein bL21 from Prochlorococcus marinus (strain SARG / CCMP1375 / SS120).